Here is a 374-residue protein sequence, read N- to C-terminus: tRNA-specific 2-thiouridylase MnmA (374 aa).

Residues 12 to 19 and Met-38 contribute to the ATP site; that span reads GMSGGVDS. The interval 98–100 is interaction with target base in tRNA; it reads NPD. The active-site Nucleophile is the Cys-103. Cysteines 103 and 202 form a disulfide. Position 128 (Gly-128) interacts with ATP. Residues 152-154 are interaction with tRNA; it reads KDQ. Residue Cys-202 is the Cysteine persulfide intermediate of the active site. Positions 316-317 are interaction with tRNA; sequence RY.

This sequence belongs to the MnmA/TRMU family.

Its subcellular location is the cytoplasm. It catalyses the reaction S-sulfanyl-L-cysteinyl-[protein] + uridine(34) in tRNA + AH2 + ATP = 2-thiouridine(34) in tRNA + L-cysteinyl-[protein] + A + AMP + diphosphate + H(+). Its function is as follows. Catalyzes the 2-thiolation of uridine at the wobble position (U34) of tRNA, leading to the formation of s(2)U34. This Vibrio vulnificus (strain YJ016) protein is tRNA-specific 2-thiouridylase MnmA.